Reading from the N-terminus, the 213-residue chain is MGREFLGLFEEWADSYDQSVEGYDEEYREVFANYEDILNTVASKAGSVVLEFGVGTGNLTKKLLEQGKTVYGIEPSEPMRKKAREKLGDKVLIVDGDFLQFPLPPKPIDTIVSTYAFHHLTDEEKGEAIAKYSQLLKKGDKIVFADTAFRDRQAFQRAIEEARERGFHHLADDLGREYYTTLDVLTKLFKENGFTVTFTQKNAFVWVMEAVKQ.

S-adenosyl-L-methionine is bound by residues glycine 53, glutamate 74, and aspartate 97.

Belongs to the methyltransferase superfamily. YrrT family.

Could be a S-adenosyl-L-methionine-dependent methyltransferase. This is an uncharacterized protein from Geobacillus sp. (strain WCH70).